The primary structure comprises 200 residues: MSVETIINRIREEAEAEIRTIRAEEACDVGAIRAQAEQKAENAYNHRIAEGQREIRQLIASQESRTRIEAKRKVREVREEMLRQCFDEVSSYLKTIRTRPEYPSFLEAMITESAKNLGPSDIAVKVHPDDRRLAADSISRINQEGFSLILSEEPIITSGGVICERISDRVVIDNTVEVRFVRLEREMIVAASRILFHGER.

The protein belongs to the V-ATPase E subunit family. Has multiple subunits with at least A(3), B(3), C, D, E, F, H, I and proteolipid K(x).

It localises to the cell membrane. In terms of biological role, component of the A-type ATP synthase that produces ATP from ADP in the presence of a proton gradient across the membrane. This Methanospirillum hungatei JF-1 (strain ATCC 27890 / DSM 864 / NBRC 100397 / JF-1) protein is A-type ATP synthase subunit E 3.